The chain runs to 294 residues: Nucleotide-binding protein CLJ_B3680 (294 aa).

An ATP-binding site is contributed by glycine 8–threonine 15. Aspartate 59 to glycine 62 contributes to the GTP binding site.

The protein belongs to the RapZ-like family.

Functionally, displays ATPase and GTPase activities. The chain is Nucleotide-binding protein CLJ_B3680 from Clostridium botulinum (strain 657 / Type Ba4).